We begin with the raw amino-acid sequence, 372 residues long: 4-hydroxy-3-methylbut-2-en-1-yl diphosphate synthase (flavodoxin) (372 aa).

Positions 270, 273, 305, and 312 each coordinate [4Fe-4S] cluster.

Belongs to the IspG family. It depends on [4Fe-4S] cluster as a cofactor.

The catalysed reaction is (2E)-4-hydroxy-3-methylbut-2-enyl diphosphate + oxidized [flavodoxin] + H2O + 2 H(+) = 2-C-methyl-D-erythritol 2,4-cyclic diphosphate + reduced [flavodoxin]. Its pathway is isoprenoid biosynthesis; isopentenyl diphosphate biosynthesis via DXP pathway; isopentenyl diphosphate from 1-deoxy-D-xylulose 5-phosphate: step 5/6. Converts 2C-methyl-D-erythritol 2,4-cyclodiphosphate (ME-2,4cPP) into 1-hydroxy-2-methyl-2-(E)-butenyl 4-diphosphate. The polypeptide is 4-hydroxy-3-methylbut-2-en-1-yl diphosphate synthase (flavodoxin) (Vibrio vulnificus (strain CMCP6)).